The sequence spans 42 residues: uncharacterized protein (42 aa).

Positions 20-42 (RSGRAERGVRAHSPAWSERPTPN) are disordered.

This is an uncharacterized protein from Escherichia coli.